We begin with the raw amino-acid sequence, 98 residues long: NADH-ubiquinone oxidoreductase chain 4L (98 aa).

A run of 3 helical transmembrane segments spans residues 1 to 21 (MIPT…GMLT), 27 to 47 (VASL…TALI), and 61 to 81 (IILL…LISI).

It belongs to the complex I subunit 4L family. In terms of assembly, core subunit of respiratory chain NADH dehydrogenase (Complex I) which is composed of 45 different subunits.

It is found in the mitochondrion inner membrane. It carries out the reaction a ubiquinone + NADH + 5 H(+)(in) = a ubiquinol + NAD(+) + 4 H(+)(out). Core subunit of the mitochondrial membrane respiratory chain NADH dehydrogenase (Complex I) which catalyzes electron transfer from NADH through the respiratory chain, using ubiquinone as an electron acceptor. Part of the enzyme membrane arm which is embedded in the lipid bilayer and involved in proton translocation. The polypeptide is NADH-ubiquinone oxidoreductase chain 4L (MT-ND4L) (Macaca sylvanus (Barbary macaque)).